Reading from the N-terminus, the 630-residue chain is UvrABC system protein C (630 aa).

The segment at 1–96 (MGAEGLQGEG…GEAHRRGGTG (96 aa)) is disordered. The segment covering 9-28 (EGEVPPQGAGVPGQVQVGVH) has biased composition (low complexity). Residues 52 to 125 (DPRGLPVEAG…IKAHRPLYNV (74 aa)) form the GIY-YIG domain. The segment covering 75–91 (RPGEKLLPRRGQGEAHR) has biased composition (basic and acidic residues). Positions 234–269 (DGLLQELEAKMREAARRLEFERAAEIRDQMEALRAF) constitute a UVR domain.

The protein belongs to the UvrC family. In terms of assembly, interacts with UvrB in an incision complex.

The protein resides in the cytoplasm. In terms of biological role, the UvrABC repair system catalyzes the recognition and processing of DNA lesions. UvrC both incises the 5' and 3' sides of the lesion. The N-terminal half is responsible for the 3' incision and the C-terminal half is responsible for the 5' incision. This is UvrABC system protein C from Thermus thermophilus (strain ATCC BAA-163 / DSM 7039 / HB27).